The primary structure comprises 434 residues: Na(+)/H(+) antiporter NhaA 1 (434 aa).

The next 10 membrane-spanning stretches (helical) occupy residues 30–50, 70–90, 108–128, 141–161, 172–192, 195–215, 286–306, 318–338, 354–374, and 386–406; these read TGGL…NVAG, LSIE…VTGL, ALPI…FVLV, VGWA…LAVV, FLLT…AIFY, QVHW…TVAV, FAVP…VSGF, VIAG…WLLA, VLGM…IGSL, and VTLG…VVLS.

It belongs to the NhaA Na(+)/H(+) (TC 2.A.33) antiporter family.

The protein localises to the cell membrane. It carries out the reaction Na(+)(in) + 2 H(+)(out) = Na(+)(out) + 2 H(+)(in). In terms of biological role, na(+)/H(+) antiporter that extrudes sodium in exchange for external protons. In Kineococcus radiotolerans (strain ATCC BAA-149 / DSM 14245 / SRS30216), this protein is Na(+)/H(+) antiporter NhaA 1.